The following is a 437-amino-acid chain: Protein translocase subunit SecY (437 aa).

10 helical membrane passes run 19–39 (LFTL…IPGV), 69–89 (LLQI…SIIL), 122–142 (VALA…GALF), 157–177 (IFTT…VMWL), 189–209 (GMSI…LWAI), 219–239 (WIEF…VVFV), 275–295 (GVIP…IVQF), 318–338 (HIIL…AISF), 378–398 (GSLY…GFGA), and 400–420 (QNFP…LETV).

This sequence belongs to the SecY/SEC61-alpha family. In terms of assembly, component of the Sec protein translocase complex. Heterotrimer consisting of SecY, SecE and SecG subunits. The heterotrimers can form oligomers, although 1 heterotrimer is thought to be able to translocate proteins. Interacts with the ribosome. Interacts with SecDF, and other proteins may be involved. Interacts with SecA.

It is found in the cell membrane. The central subunit of the protein translocation channel SecYEG. Consists of two halves formed by TMs 1-5 and 6-10. These two domains form a lateral gate at the front which open onto the bilayer between TMs 2 and 7, and are clamped together by SecE at the back. The channel is closed by both a pore ring composed of hydrophobic SecY resides and a short helix (helix 2A) on the extracellular side of the membrane which forms a plug. The plug probably moves laterally to allow the channel to open. The ring and the pore may move independently. This Streptomyces lividans protein is Protein translocase subunit SecY.